Consider the following 1442-residue polypeptide: Protein patched homolog 1 (1442 aa).

Positions Met-1–Ala-45 are disordered. Topologically, residues Met-1 to Lys-101 are cytoplasmic. Basic residues predominate over residues Arg-28–Gly-39. A helical transmembrane segment spans residues Phe-102–Glu-122. Topologically, residues Thr-123–Asp-436 are extracellular. 4 N-linked (GlcNAc...) asparagine glycosylation sites follow: Asn-141, Asn-312, Asn-349, and Asn-414. The chain crosses the membrane as a helical span at residues Val-437–Met-457. The 161-residue stretch at Ser-438–Met-598 folds into the SSD domain. At Leu-458 to Ala-472 the chain is on the cytoplasmic side. A helical membrane pass occupies residues Gly-473–Ile-493. The Extracellular segment spans residues Ser-494–Gln-501. Residues Val-502–Phe-522 traverse the membrane as a helical segment. Over Ser-523–Ser-547 the chain is Cytoplasmic. The chain crosses the membrane as a helical span at residues Val-548–Pro-568. The Extracellular portion of the chain corresponds to Ala-569 to Ala-577. The helical transmembrane segment at Ala-578 to Met-598 threads the bilayer. At Asp-599–Lys-747 the chain is on the cytoplasmic side. A helical transmembrane segment spans residues Ala-748–Thr-768. Topologically, residues Arg-769–Trp-1026 are extracellular. N-linked (GlcNAc...) asparagine glycosylation is found at Asn-827, Asn-874, and Asn-999. The chain crosses the membrane as a helical span at residues Leu-1027–Leu-1047. Residues Asn-1048–Gly-1053 lie on the Cytoplasmic side of the membrane. The chain crosses the membrane as a helical span at residues Ile-1054–Gly-1074. The Extracellular portion of the chain corresponds to Ile-1075–Val-1082. A helical membrane pass occupies residues Val-1083–Leu-1101. Over Ala-1102 to His-1120 the chain is Cytoplasmic. A helical membrane pass occupies residues Met-1121–Gly-1141. The Extracellular segment spans residues Ser-1142 to Ala-1153. The helical transmembrane segment at Val-1154–Leu-1174 threads the bilayer. The Cytoplasmic segment spans residues Ser-1175–Glu-1442. Disordered stretches follow at residues Gly-1188 to Ser-1231 and Ser-1266 to Lys-1338. A compositionally biased stretch (low complexity) spans Ser-1217–Ser-1226. A compositionally biased stretch (polar residues) spans Gln-1276–Trp-1293.

The protein belongs to the patched family. Glycosylation is necessary for SHH binding. In terms of tissue distribution, expression is seen in the embryonic neural tube, sclerotome, visceral mesoderm, and limb bud.

The protein localises to the membrane. Functionally, acts as a receptor for sonic hedgehog (SHH), indian hedgehog (IHH) and desert hedgehog (DHH). Associates with the smoothened protein (SMO) to transduce the hedgehog's proteins signal. The protein is Protein patched homolog 1 (PTCH1) of Gallus gallus (Chicken).